A 416-amino-acid polypeptide reads, in one-letter code: Prostate tumor-overexpressed gene 1 protein (416 aa).

A disordered region spans residues 1–53 (MVRPRRAPYRSGAGGPLGGRGRPPRPLVVRAVRSRSWPASPRGPQPPRIRARS). The span at 12-21 (GAGGPLGGRG) shows a compositional bias: gly residues. Positions 27 to 36 (LVVRAVRSRS) are enriched in low complexity. S53 carries the post-translational modification Phosphoserine. Residues 184–416 (NGFAGCMLFP…QEQQQRGMGG (233 aa)) are interaction with FLOT1.

It belongs to the Mediator complex subunit 25 family. PTOV1 subfamily. In terms of assembly, may interact with CREBBP. Interacts with FLOT1. Post-translationally, ubiquitinated by the CRL2(KLHDC2) complex, which recognizes the diglycine (Gly-Gly) at the C-terminus, leading to its degradation. Ubiquitinated by the CRL2(APPBP2) complex, which recognizes the Arg-Xaa-Xaa-Gly sequence at the C-terminus, leading to its degradation. Expressed in brain, heart, kidney, liver, placenta, skeletal muscle and small intestine.

It localises to the cytoplasm. It is found in the nucleus. The protein localises to the cell membrane. The protein resides in the perinuclear region. Functionally, may activate transcription. Required for nuclear translocation of FLOT1. Promotes cell proliferation. The sequence is that of Prostate tumor-overexpressed gene 1 protein (PTOV1) from Homo sapiens (Human).